The sequence spans 438 residues: Adenylosuccinate synthetase (438 aa).

GTP-binding positions include 13–19 (GDEGKGK) and 41–43 (GHT). Asp-14 functions as the Proton acceptor in the catalytic mechanism. Residues Asp-14 and Gly-41 each coordinate Mg(2+). IMP-binding positions include 14-17 (DEGK), 39-42 (NAGH), Thr-130, Arg-144, Gln-225, Thr-240, and Arg-312. The active-site Proton donor is the His-42. Position 308-314 (308-314 (ATTGRQR)) interacts with substrate. GTP is bound by residues Arg-314, 340 to 342 (KLD), and 422 to 424 (STG).

This sequence belongs to the adenylosuccinate synthetase family. As to quaternary structure, homodimer. Mg(2+) is required as a cofactor.

It localises to the cytoplasm. It catalyses the reaction IMP + L-aspartate + GTP = N(6)-(1,2-dicarboxyethyl)-AMP + GDP + phosphate + 2 H(+). The protein operates within purine metabolism; AMP biosynthesis via de novo pathway; AMP from IMP: step 1/2. Its function is as follows. Plays an important role in the de novo pathway of purine nucleotide biosynthesis. Catalyzes the first committed step in the biosynthesis of AMP from IMP. This chain is Adenylosuccinate synthetase, found in Vesicomyosocius okutanii subsp. Calyptogena okutanii (strain HA).